Reading from the N-terminus, the 390-residue chain is Peroxisomal sarcosine oxidase (390 aa).

9 to 39 (DAIVIGAGIQGCFTAYHLAKHRKRILLLEQF) is an FAD binding site. At lysine 126 the chain carries N6-acetyllysine. At cysteine 319 the chain carries S-8alpha-FAD cysteine. Residues 388-390 (AHL) carry the Microbody targeting signal motif.

It belongs to the MSOX/MTOX family. The cofactor is FAD. Expressed in the liver and kidney.

The protein resides in the peroxisome. The enzyme catalyses sarcosine + O2 + H2O = formaldehyde + glycine + H2O2. It catalyses the reaction L-pipecolate + O2 = L-1-piperideine-6-carboxylate + H2O2 + H(+). Metabolizes sarcosine and L-pipecolic acid. This Homo sapiens (Human) protein is Peroxisomal sarcosine oxidase (PIPOX).